An 827-amino-acid polypeptide reads, in one-letter code: Glycerol-3-phosphate acyltransferase (827 aa).

The HXXXXD motif signature appears at 325 to 330; sequence CHRSHM.

The protein belongs to the GPAT/DAPAT family.

The protein localises to the cell inner membrane. It catalyses the reaction sn-glycerol 3-phosphate + an acyl-CoA = a 1-acyl-sn-glycero-3-phosphate + CoA. It participates in phospholipid metabolism; CDP-diacylglycerol biosynthesis; CDP-diacylglycerol from sn-glycerol 3-phosphate: step 1/3. The sequence is that of Glycerol-3-phosphate acyltransferase from Shigella flexneri serotype 5b (strain 8401).